A 393-amino-acid polypeptide reads, in one-letter code: Arrestin-C (393 aa).

The span at 371–386 shows a compositional bias: basic and acidic residues; the sequence is FARQEDGGEEKQKALA. Residues 371–393 are disordered; that stretch reads FARQEDGGEEKQKALAEEGDEGS.

It belongs to the arrestin family. Homodimer; disulfide-linked in response to retinal illumination. Interacts with CXCR4; the interaction is dependent on the C-terminal phosphorylation of CXCR4 and modulates the calcium ion mobilization activity of CXCR4.

The protein resides in the photoreceptor inner segment. It is found in the cell projection. It localises to the cilium. The protein localises to the photoreceptor outer segment. Functionally, may play a role in an as yet undefined retina-specific signal transduction. Could bind to photoactivated-phosphorylated red/green opsins. The chain is Arrestin-C (ARR3) from Ictidomys tridecemlineatus (Thirteen-lined ground squirrel).